We begin with the raw amino-acid sequence, 418 residues long: Light-independent protochlorophyllide reductase subunit N (418 aa).

3 residues coordinate [4Fe-4S] cluster: C17, C42, and C103.

It belongs to the BchN/ChlN family. Protochlorophyllide reductase is composed of three subunits; ChlL, ChlN and ChlB. Forms a heterotetramer of two ChlB and two ChlN subunits. [4Fe-4S] cluster serves as cofactor.

It catalyses the reaction chlorophyllide a + oxidized 2[4Fe-4S]-[ferredoxin] + 2 ADP + 2 phosphate = protochlorophyllide a + reduced 2[4Fe-4S]-[ferredoxin] + 2 ATP + 2 H2O. Its pathway is porphyrin-containing compound metabolism; chlorophyll biosynthesis (light-independent). Component of the dark-operative protochlorophyllide reductase (DPOR) that uses Mg-ATP and reduced ferredoxin to reduce ring D of protochlorophyllide (Pchlide) to form chlorophyllide a (Chlide). This reaction is light-independent. The NB-protein (ChlN-ChlB) is the catalytic component of the complex. The protein is Light-independent protochlorophyllide reductase subunit N of Prochlorococcus marinus (strain MIT 9303).